The following is a 180-amino-acid chain: NADH-quinone oxidoreductase subunit I (180 aa).

4Fe-4S ferredoxin-type domains are found at residues 50–80 (LTRD…LQKA) and 90–119 (EFFR…LTPD). Residues C60, C63, C66, C70, C99, C102, C105, and C109 each coordinate [4Fe-4S] cluster.

Belongs to the complex I 23 kDa subunit family. As to quaternary structure, NDH-1 is composed of 13 different subunits. Subunits NuoA, H, J, K, L, M, N constitute the membrane sector of the complex. The cofactor is [4Fe-4S] cluster.

The protein localises to the cell inner membrane. The catalysed reaction is a quinone + NADH + 5 H(+)(in) = a quinol + NAD(+) + 4 H(+)(out). In terms of biological role, NDH-1 shuttles electrons from NADH, via FMN and iron-sulfur (Fe-S) centers, to quinones in the respiratory chain. The immediate electron acceptor for the enzyme in this species is believed to be ubiquinone. Couples the redox reaction to proton translocation (for every two electrons transferred, four hydrogen ions are translocated across the cytoplasmic membrane), and thus conserves the redox energy in a proton gradient. The sequence is that of NADH-quinone oxidoreductase subunit I from Salmonella choleraesuis (strain SC-B67).